A 343-amino-acid polypeptide reads, in one-letter code: MQLLTRANVSSSPSRRPESNALKQKCHGHSNADNSLSRSKSDVAIELTNVSKSYGDKVVVDQLSFTITSGECFGLLGPNGAGKSTVSRLVLGLAPPDEGTITVLGEPVPARARLARSRIGVVPQFDTLDREFTARENLLVFGRYFGLHTRELEEAIPPLLDFARLESKADVPVAQLSGGMQRRLTLACALINDPQLLILDEPTTGLDPHARHLIWERLRSLLALGKTILLTTHFMEEADRLCDRLCVIEHGRKIVEGRPHALIDEQIGCDVIEIYGGNPRELTSVVGPYAQRVEVSGETLFCYSSDPEQVRLQLRGRTGLRLLQRPPNLEDVFLRLTGREMKD.

Over residues 1–14 the composition is skewed to polar residues; the sequence is MQLLTRANVSSSPS. The tract at residues 1–38 is disordered; the sequence is MQLLTRANVSSSPSRRPESNALKQKCHGHSNADNSLSR. Residues 45-275 form the ABC transporter domain; sequence IELTNVSKSY…QIGCDVIEIY (231 aa). 77–84 lines the ATP pocket; that stretch reads GPNGAGKS.

It belongs to the ABC transporter superfamily. Lipooligosaccharide exporter (TC 3.A.1.102) family. In terms of assembly, the complex is composed of two ATP-binding proteins (NodI) and two transmembrane proteins (NodJ).

It is found in the cell inner membrane. Functionally, part of the ABC transporter complex NodIJ involved in the export of the nodulation factors (Nod factors), the bacterial signal molecules that induce symbiosis and subsequent nodulation induction. Nod factors are LCO (lipo-chitin oligosaccharide), a modified beta-1,4-linked N-acetylglucosamine oligosaccharide. This subunit is responsible for energy coupling to the transport system. This is Nod factor export ATP-binding protein I from Sinorhizobium fredii (strain NBRC 101917 / NGR234).